We begin with the raw amino-acid sequence, 137 residues long: Small ribosomal subunit protein uS9 (137 aa).

The tract at residues 114-137 (DSRMKERKKPGLRGARRGVQFSKR) is disordered. Basic residues predominate over residues 118–137 (KERKKPGLRGARRGVQFSKR).

It belongs to the universal ribosomal protein uS9 family.

The protein is Small ribosomal subunit protein uS9 of Rhodopirellula baltica (strain DSM 10527 / NCIMB 13988 / SH1).